The sequence spans 204 residues: MSSLPDWRDEYLASIKEAEKNSPVNRDLVEACSQLQDRVAALEAERDALKASGASAGQSASDPASQSGDAAQSAVVARLRLDLAEALGTQERLQSRLGLAESELERLRAKTAEDAKTIRTLNTQCVSLSTKVKDRNEELQGKSKLVENVQDELIALTLQLNVMEQQKAKIQAENDQLVERWMKRMGQEAEAMNLANEPKFAKRG.

A coiled-coil region spans residues 24–183 (VNRDLVEACS…NDQLVERWMK (160 aa)). The tract at residues 50 to 69 (KASGASAGQSASDPASQSGD) is disordered. Low complexity predominate over residues 51–69 (ASGASAGQSASDPASQSGD).

It belongs to the ATG16 family. In terms of assembly, homodimer. Part of the ATG5-ATG12/ATG16 complex. Several units of each may be present in this complex.

The protein localises to the preautophagosomal structure membrane. In terms of biological role, stabilizes the ATG5-ATG12 conjugate which is necessary for autophagy. The ATG5-ATG12/ATG16 complex is required for efficient promotion of ATG8-conjugation to phosphatidylethanolamine and ATG8 localization to the pre-autophagosomal structure (PAS). Also recruits ATG3 to the PAS. Involved in endoplasmic reticulum-specific autophagic process and is essential for the survival of cells subjected to severe ER stress. This is Autophagy protein 16 (ATG16) from Pyricularia oryzae (strain 70-15 / ATCC MYA-4617 / FGSC 8958) (Rice blast fungus).